The sequence spans 557 residues: Dihydroxy-acid dehydratase (557 aa).

Asp78 contributes to the Mg(2+) binding site. Cys119 lines the [2Fe-2S] cluster pocket. The Mg(2+) site is built by Asp120 and Lys121. Residue Lys121 is modified to N6-carboxylysine. A [2Fe-2S] cluster-binding site is contributed by Cys192. Glu442 serves as a coordination point for Mg(2+). Ser468 functions as the Proton acceptor in the catalytic mechanism.

Belongs to the IlvD/Edd family. Homodimer. The cofactor is [2Fe-2S] cluster. Mg(2+) is required as a cofactor.

The enzyme catalyses (2R)-2,3-dihydroxy-3-methylbutanoate = 3-methyl-2-oxobutanoate + H2O. The catalysed reaction is (2R,3R)-2,3-dihydroxy-3-methylpentanoate = (S)-3-methyl-2-oxopentanoate + H2O. The protein operates within amino-acid biosynthesis; L-isoleucine biosynthesis; L-isoleucine from 2-oxobutanoate: step 3/4. It participates in amino-acid biosynthesis; L-valine biosynthesis; L-valine from pyruvate: step 3/4. In terms of biological role, functions in the biosynthesis of branched-chain amino acids. Catalyzes the dehydration of (2R,3R)-2,3-dihydroxy-3-methylpentanoate (2,3-dihydroxy-3-methylvalerate) into 2-oxo-3-methylpentanoate (2-oxo-3-methylvalerate) and of (2R)-2,3-dihydroxy-3-methylbutanoate (2,3-dihydroxyisovalerate) into 2-oxo-3-methylbutanoate (2-oxoisovalerate), the penultimate precursor to L-isoleucine and L-valine, respectively. The sequence is that of Dihydroxy-acid dehydratase from Bacillus cereus (strain AH820).